Here is a 308-residue protein sequence, read N- to C-terminus: MRPEGSLTYRVPERLRQGFCGVGRAAQALVCASAKEGTAFRMEAVQEGAAGVESEQAALGEEAVLLLDDIMAEVEVVAEEEGLVERREEAQRAQQAVPGPGPMTPESALEELLAVQVELEPVNAQARKAFSRQREKMERRRKPHLDRRGAVIQSVPGFWANVIANHPQMSALITDEDEDMLSYMVSLEVEEEKHPVHLCKIMLFFRSNPYFQNKVITKEYLVNITEYRASHSTPIEWYPDYEVEAYRRRHHNSSLNFFNWFSDHNFAGSNKIAEILCKDLWRNPLQYYKRMKPPEEGTETSGDSQLLS.

Belongs to the nucleosome assembly protein (NAP) family.

The protein resides in the cytoplasm. The protein localises to the nucleus. Functionally, may be involved in sperm differentiation and proliferation. In Homo sapiens (Human), this protein is Testis-specific Y-encoded protein 3 (TSPY3).